Here is a 1485-residue protein sequence, read N- to C-terminus: ABC multidrug transporter I (1485 aa).

Disordered regions lie at residues 1–57 and 75–111; these read MDEK…EEFS and KQIS…ALRG. Over residues 8–24 the composition is skewed to polar residues; sequence SESSNGSDVDSLSTASA. An N-linked (GlcNAc...) asparagine glycan is attached at Asn-12. The segment covering 85–95 has biased composition (basic and acidic residues); sequence GKTEDVERSDS. N-linked (GlcNAc...) asparagine glycans are attached at residues Asn-132, Asn-335, and Asn-451. The ABC transporter 1 domain maps to 163-411; it reads MHMLGYGKKG…FESLGFKERP (249 aa). 7 helical membrane passes run 522–542, 556–576, 600–620, 623–643, 664–684, 691–711, and 774–794; these read FAQT…GTVW, GGLL…ELVS, IAQI…FSII, FMCG…IIVL, YAMK…GYLI, EWLR…ALMV, and FGIM…HGET. Positions 846–1089 constitute an ABC transporter 2 domain; that stretch reads FTWEDVCYDV…LLDYFRRNGA (244 aa). ATP is bound at residue 882 to 889; sequence GASGAGKT. The next 5 membrane-spanning stretches (helical) occupy residues 1184 to 1204, 1211 to 1231, 1268 to 1288, 1299 to 1319, and 1325 to 1345; these read YGFT…LAFL, ASLQ…AIIL, LPYS…IPGF, FLMV…ISAL, and IASQ…GVAI. N-linked (GlcNAc...) asparagine glycans are attached at residues Asn-1396 and Asn-1418. Residues 1449–1469 form a helical membrane-spanning segment; it reads LGIFLAFIGSNLIILFLAVSF.

Belongs to the ABC transporter superfamily. ABCG family. PDR (TC 3.A.1.205) subfamily.

The protein localises to the cell membrane. It catalyses the reaction fluconazole(in) + ATP + H2O = fluconazole(out) + ADP + phosphate + H(+). With respect to regulation, the efflux inhibitor FK506 does not impair the transport activity. ABC efflux transporter that confers resistance to fluconazole (FLC) but shows no resistance to other azoles. Is also able to transport rhodamine 6G (R-6G), a known substrate for many ABC transporters. The chain is ABC multidrug transporter I from Aspergillus fumigatus (strain ATCC MYA-4609 / CBS 101355 / FGSC A1100 / Af293) (Neosartorya fumigata).